Here is a 311-residue protein sequence, read N- to C-terminus: Inositol oxygenase 1 (311 aa).

Over residues 1-11 (MTILIDRHSDQ) the composition is skewed to basic and acidic residues. Residues 1 to 29 (MTILIDRHSDQNDAGDEIVEKNQGNGKEE) are disordered. Residues Arg-52 and 109–111 (DES) contribute to the substrate site. His-122, His-147, and Asp-148 together coordinate Fe cation. Substrate contacts are provided by residues Lys-151 and 168-169 (GD). 3 residues coordinate Fe cation: His-220, His-246, and Asp-279. 246–247 (HS) contributes to the substrate binding site.

This sequence belongs to the myo-inositol oxygenase family. Requires Fe cation as cofactor. As to expression, expressed in roots, young leaves, stems, flowers and siliques.

Its subcellular location is the cytoplasm. The catalysed reaction is myo-inositol + O2 = D-glucuronate + H2O + H(+). Its pathway is polyol metabolism; myo-inositol degradation into D-glucuronate; D-glucuronate from myo-inositol: step 1/1. Catalyzes the oxygenative cleavage of myo-inositol to D-glucuronate. Involved in the biosynthesis of UDP-glucuronic acid (UDP-GlcA), providing nucleotide sugars for cell-wall polymers. May be also involved in plant ascorbate biosynthesis. The protein is Inositol oxygenase 1 (MIOX1) of Arabidopsis thaliana (Mouse-ear cress).